The primary structure comprises 253 residues: Peptidase inhibitor R3HDML (253 aa).

The signal sequence occupies residues 1-23 (MPLLSSIVGLTGLLLWMGHTVGA). Residues 24–56 (LRMPNTTLVQGRPKNTAVWPLSGLGVPRHRRKR) constitute a propeptide that is removed on maturation. N-linked (GlcNAc...) asparagine glycosylation is found at Asn28 and Asn120. An SCP domain is found at 67-207 (LDYHNHIRAS…QQAVYLVCNY (141 aa)).

The protein belongs to the CRISP family.

It is found in the secreted. Its function is as follows. Putative serine protease inhibitor. The protein is Peptidase inhibitor R3HDML (R3hdml) of Mus musculus (Mouse).